The following is a 143-amino-acid chain: Large ribosomal subunit protein uL11 (143 aa).

This sequence belongs to the universal ribosomal protein uL11 family. As to quaternary structure, part of the ribosomal stalk of the 50S ribosomal subunit. Interacts with L10 and the large rRNA to form the base of the stalk. L10 forms an elongated spine to which L12 dimers bind in a sequential fashion forming a multimeric L10(L12)X complex. In terms of processing, one or more lysine residues are methylated.

In terms of biological role, forms part of the ribosomal stalk which helps the ribosome interact with GTP-bound translation factors. The polypeptide is Large ribosomal subunit protein uL11 (Polynucleobacter asymbioticus (strain DSM 18221 / CIP 109841 / QLW-P1DMWA-1) (Polynucleobacter necessarius subsp. asymbioticus)).